The sequence spans 175 residues: MAEVHVIGQIIGATGFSEGSLFCKWGIHTGAAWKLLSGVREGQTQVDTPQTGDMAYWSHPIDLHFATKGLQGWPRLHLQVWSQDSFGRCQLAGYGFCHVPSSPGTHQLDCPTWRPLGSWREQLARAFVGGGPQLLHADTIYSGADRYRLHTAAGGTVHLGIGLLLRHFDRYGVEC.

The region spanning 2–118 (AEVHVIGQII…DCPTWRPLGS (117 aa)) is the C2 B9-type domain.

The protein belongs to the B9D family. Part of the tectonic-like complex (also named B9 complex). Interacts with TUBG1.

The protein localises to the cytoplasm. It is found in the cytoskeleton. The protein resides in the cilium basal body. It localises to the cilium axoneme. Its subcellular location is the nucleus. Functionally, component of the tectonic-like complex, a complex localized at the transition zone of primary cilia and acting as a barrier that prevents diffusion of transmembrane proteins between the cilia and plasma membranes. The polypeptide is B9 domain-containing protein 2 (B9d2) (Rattus norvegicus (Rat)).